We begin with the raw amino-acid sequence, 444 residues long: Putative permease IIC component YwbA (444 aa).

Positions Met8–Phe421 constitute a PTS EIIC type-3 domain. A run of 10 helical transmembrane segments spans residues Gly31–Leu51, Leu72–Ala92, Leu104–Phe124, Gly138–Phe158, Phe187–Ile207, Leu223–Val243, Leu246–Trp266, Phe291–Met311, Pro349–Ser371, and Ser402–Phe422.

The protein localises to the cell membrane. In terms of biological role, the phosphoenolpyruvate-dependent sugar phosphotransferase system (PTS), a major carbohydrate active -transport system, catalyzes the phosphorylation of incoming sugar substrates concomitant with their translocation across the cell membrane. In Bacillus subtilis (strain 168), this protein is Putative permease IIC component YwbA (ywbA).